Consider the following 501-residue polypeptide: L-ornithine N(5)-monooxygenase (501 aa).

Residues 1 to 31 (MESVERKSESSYLGMRNMQPEQRLSLDPPRL) are disordered. Residues 83 to 91 (ERQKQFAWH) and Gln102 contribute to the FAD site. Lys107 contacts substrate. Val168 serves as a coordination point for FAD. NADP(+)-binding positions include 254 to 257 (SGQS) and Arg279. Residues 293–296 (NEIF) and Asn323 each bind substrate. 323–325 (NYS) serves as a coordination point for NADP(+). The tract at residues 366-390 (EHHGPQSRMRIHLKSSKPESEGAAN) is disordered. Positions 381 to 390 (SKPESEGAAN) are enriched in basic and acidic residues. 466-468 (SLL) serves as a coordination point for FAD. Residue Ser469 participates in substrate binding.

Belongs to the lysine N(6)-hydroxylase/L-ornithine N(5)-oxygenase family. Homotetramer. The cofactor is FAD.

The enzyme catalyses L-ornithine + NADPH + O2 = N(5)-hydroxy-L-ornithine + NADP(+) + H2O. It catalyses the reaction L-ornithine + NADH + O2 = N(5)-hydroxy-L-ornithine + NAD(+) + H2O. Its pathway is siderophore biosynthesis; ferrichrome biosynthesis. Its function is as follows. L-ornithine N(5)-monooxygenase; part of the siderophore biosynthetic pathway. Aspergillus fumigatus produces four types of siderophores, low-molecular-mass iron chelators, including excreted fusarinine C (FsC) and triacetylfusarinine C (TAFC) for iron uptake; and intacellular ferricrocin (FC) for hyphal and hydroxyferricrocin (HFC) for conidial iron distribution and storage. TAFC consists of three N(2)-acetyl-N(5)-anhydromevalonyl-N(5)-hydroxyornithine residues cyclically linked by ester bonds; FC is a cyclic hexapeptide with the structure Gly-Ser-Gly-(N(5)-acetyl-N(5)-hydroxyornithine)x3. The biosynthesis of all four siderophores depends on the hydroxylation of ornithine, catalyzed by the monooxygenase sidA. SidA is highly specific for its substrate, only hydrolyzing l-ornithine, and has preference for NADPH over NADH, NADPH playing a role in stabilization of the C4a-hydroperoxyflavin intermediate. Subsequently, the pathways for biosynthesis of extra- and intracellular siderophores split. For biosynthesis of extracellular siderophores, the transacylase sidF transfers anhydromevalonyl to N(5)-hydroxyornithine. The required anhydromevalonyl-CoA moiety is derived from mevalonate by CoA ligation and dehydration catalyzed by sidI and sidH respectively. The acetylation of N(5)-hydroxyornithine for FC biosynthesis involves the constitutively expressed sidL. FC is hydroxylated to HFC by an as yet uncharacterized enzyme during conidiation. Assembly of fusarinine C (FsC) and FC is catalyzed by two different nonribosomal peptide synthetases (NRPS), sidD and sidC respectively. Subsequently, sidG catalyzes N2-acetylation of FsC for forming TAFC. Both extra- and intracellular siderophores are crucial for growth during iron limitation and virulence. This Aspergillus fumigatus (strain ATCC MYA-4609 / CBS 101355 / FGSC A1100 / Af293) (Neosartorya fumigata) protein is L-ornithine N(5)-monooxygenase.